A 481-amino-acid chain; its full sequence is Mechanosensory protein 2 (481 aa).

The span at 1–22 (MSATMSSARNSVVSLSSNGSVK) shows a compositional bias: low complexity. 2 disordered regions span residues 1 to 67 (MSAT…MATR) and 80 to 104 (SANSDDDSVKKEKQAEKDVEKGNGK). Over residues 27–38 (LVSNERSSSIQQ) the composition is skewed to polar residues. The segment covering 86–104 (DSVKKEKQAEKDVEKGNGK) has biased composition (basic and acidic residues). A helical membrane pass occupies residues 115 to 135 (GVCGWILTILSYLLIFFTLPI). A compositionally biased stretch (gly residues) spans 403-421 (EGGGGHGHSHGGGGGGLGS). A disordered region spans residues 403 to 481 (EGGGGHGHSH…SQLDPALLIR (79 aa)). A compositionally biased stretch (low complexity) spans 433–447 (SGPSTTTTSGRPLLR). A compositionally biased stretch (polar residues) spans 463 to 473 (APNQSQTSVSQ).

This sequence belongs to the band 7/mec-2 family. In terms of assembly, component of a non-voltage-gated amiloride-sensitive cation channel complex (also called the degenerin channel complex) composed of at least the mec-2, mec-4, mec-6 and mec-10 subunits; the complex mediates mechanotransduction in touch cells. Interacts with mec-6 and mec-4.

The protein resides in the membrane. In terms of biological role, subunit of an amiloride-sensitive cation channel (degenerin channel complex) permeable for sodium, potassium, lithium and N-methylglucamine, and required for mechanosensory transduction (touch sensitivity). Positively regulates the activity of the putative mechanosensory transduction channel. May link the mechanosensory channel and the microtubule cytoskeleton of the touch receptor neurons. Required for the function of a set of six touch receptor neurons. The polypeptide is Mechanosensory protein 2 (Caenorhabditis elegans).